A 439-amino-acid polypeptide reads, in one-letter code: Protein ABHD8 (439 aa).

Disordered regions lie at residues His-54–Lys-75 and Glu-122–Arg-148. The segment covering Ala-58–Pro-67 has biased composition (pro residues). Basic residues predominate over residues Gly-138–Arg-148. Positions Val-169 to Gly-271 constitute an AB hydrolase-1 domain. Residues Ser-244, Asp-362, and His-390 each act as charge relay system in the active site. The segment at Glu-415 to Lys-439 is disordered.

This sequence belongs to the AB hydrolase superfamily. In terms of assembly, interacts with NLRP3 (via NACHT and LLR domains); this interaction is enhanced in the presence of NLRP3 inflammasome inducers, such as ATP, nigericin, silica, or alum. Interacts with ZDHHC12.

Its subcellular location is the cytoplasm. Negatively regulates NLRP3-driven inflammation. Promotes NLRP3 degradation through the chaperone-mediated autophagy (CMA) pathway, hence attenuating inflammasome activation and IL1B secretion. Acts by recruiting palmitoyltransferase ZDHHC12 to NLRP3, facilitating NLRP3 palmitoylation and subsequent degradation. The polypeptide is Protein ABHD8 (Mus musculus (Mouse)).